Consider the following 447-residue polypeptide: Tubulin beta-2 chain (447 aa).

Residues Q11, E69, S138, G142, T143, G144, N204, and N226 each contribute to the GTP site. E69 lines the Mg(2+) pocket. The disordered stretch occupies residues 426–447 (QDAGVDEEEEEYEEEAPLEEEV). Acidic residues predominate over residues 429-447 (GVDEEEEEYEEEAPLEEEV).

This sequence belongs to the tubulin family. Dimer of alpha and beta chains. A typical microtubule is a hollow water-filled tube with an outer diameter of 25 nm and an inner diameter of 15 nM. Alpha-beta heterodimers associate head-to-tail to form protofilaments running lengthwise along the microtubule wall with the beta-tubulin subunit facing the microtubule plus end conferring a structural polarity. Microtubules usually have 13 protofilaments but different protofilament numbers can be found in some organisms and specialized cells. Mg(2+) serves as cofactor.

The protein resides in the cytoplasm. It localises to the cytoskeleton. In terms of biological role, tubulin is the major constituent of microtubules, a cylinder consisting of laterally associated linear protofilaments composed of alpha- and beta-tubulin heterodimers. Microtubules grow by the addition of GTP-tubulin dimers to the microtubule end, where a stabilizing cap forms. Below the cap, tubulin dimers are in GDP-bound state, owing to GTPase activity of alpha-tubulin. The sequence is that of Tubulin beta-2 chain (TUB2) from Colletotrichum gloeosporioides (Anthracnose fungus).